We begin with the raw amino-acid sequence, 165 residues long: Cytochrome c-type biogenesis protein CcmE (165 aa).

Residues 1–7 lie on the Cytoplasmic side of the membrane; the sequence is MTRKQRR. Residues 8–28 form a helical; Signal-anchor for type II membrane protein membrane-spanning segment; that stretch reads LMMIGGAGVVLVVAVGLVLNA. The Periplasmic portion of the chain corresponds to 29–165; sequence MRGSIVFFST…ASADAMRPAR (137 aa). Heme-binding residues include His-122 and Tyr-126. Residues 138 to 149 are compositionally biased toward basic and acidic residues; the sequence is QGHWKDDYEKKP. The segment at 138 to 165 is disordered; it reads QGHWKDDYEKKPPGPGAAASADAMRPAR. A compositionally biased stretch (low complexity) spans 153–165; the sequence is GAAASADAMRPAR.

The protein belongs to the CcmE/CycJ family.

Its subcellular location is the cell inner membrane. In terms of biological role, heme chaperone required for the biogenesis of c-type cytochromes. Transiently binds heme delivered by CcmC and transfers the heme to apo-cytochromes in a process facilitated by CcmF and CcmH. This is Cytochrome c-type biogenesis protein CcmE from Rhodopseudomonas palustris (strain HaA2).